Here is a 334-residue protein sequence, read N- to C-terminus: Ornithine carbamoyltransferase, catabolic (334 aa).

Carbamoyl phosphate is bound by residues 57 to 60, glutamine 84, arginine 108, and 135 to 138; these read STRT and HPTQ. Residues asparagine 168, aspartate 232, and 236–237 contribute to the L-ornithine site; that span reads SM. Residues 274–275 and arginine 320 contribute to the carbamoyl phosphate site; that span reads CL.

It belongs to the aspartate/ornithine carbamoyltransferase superfamily. OTCase family.

It is found in the cytoplasm. It carries out the reaction carbamoyl phosphate + L-ornithine = L-citrulline + phosphate + H(+). Its pathway is amino-acid degradation; L-arginine degradation via ADI pathway; carbamoyl phosphate from L-arginine: step 2/2. Reversibly catalyzes the transfer of the carbamoyl group from carbamoyl phosphate (CP) to the N(epsilon) atom of ornithine (ORN) to produce L-citrulline. In Rhizobium meliloti (strain 1021) (Ensifer meliloti), this protein is Ornithine carbamoyltransferase, catabolic (arcB).